The primary structure comprises 1142 residues: Nucleoporin nup131 (1142 aa).

The protein belongs to the nucleoporin Nup133 family. Component of the npc107-120 complex which consists of nup85, nup107, nup120, nup131, nup132 and seh1. Interacts with nup107.

The protein localises to the nucleus. In terms of biological role, functions as a component of the nuclear pore complex (NPC). NPC components, collectively referred to as nucleoporins (NUPs), can play the role of both NPC structural components and of docking or interaction partners for transiently associated nuclear transport factors. Active directional transport is assured by both, a Phe-Gly (FG) repeat affinity gradient for these transport factors across the NPC and a transport cofactor concentration gradient across the nuclear envelope. This is Nucleoporin nup131 (nup131) from Schizosaccharomyces pombe (strain 972 / ATCC 24843) (Fission yeast).